Reading from the N-terminus, the 447-residue chain is Phosphoglucosamine mutase (447 aa).

Serine 106 (phosphoserine intermediate) is an active-site residue. Serine 106, aspartate 245, aspartate 247, and aspartate 249 together coordinate Mg(2+). At serine 106 the chain carries Phosphoserine.

The protein belongs to the phosphohexose mutase family. Mg(2+) serves as cofactor. In terms of processing, activated by phosphorylation.

It carries out the reaction alpha-D-glucosamine 1-phosphate = D-glucosamine 6-phosphate. Catalyzes the conversion of glucosamine-6-phosphate to glucosamine-1-phosphate. This Cupriavidus taiwanensis (strain DSM 17343 / BCRC 17206 / CCUG 44338 / CIP 107171 / LMG 19424 / R1) (Ralstonia taiwanensis (strain LMG 19424)) protein is Phosphoglucosamine mutase.